The following is a 192-amino-acid chain: Thymidine kinase (192 aa).

ATP-binding positions include 9–16 (SSMNAGKS) and 87–90 (DEAQ). Catalysis depends on E88, which acts as the Proton acceptor. C145, C147, C182, and H185 together coordinate Zn(2+).

It belongs to the thymidine kinase family. As to quaternary structure, homotetramer.

The protein localises to the cytoplasm. It catalyses the reaction thymidine + ATP = dTMP + ADP + H(+). The protein is Thymidine kinase of Colwellia psychrerythraea (strain 34H / ATCC BAA-681) (Vibrio psychroerythus).